Here is a 253-residue protein sequence, read N- to C-terminus: 2-C-methyl-D-erythritol 4-phosphate cytidylyltransferase (253 aa).

This sequence belongs to the IspD/TarI cytidylyltransferase family. IspD subfamily.

It catalyses the reaction 2-C-methyl-D-erythritol 4-phosphate + CTP + H(+) = 4-CDP-2-C-methyl-D-erythritol + diphosphate. The protein operates within isoprenoid biosynthesis; isopentenyl diphosphate biosynthesis via DXP pathway; isopentenyl diphosphate from 1-deoxy-D-xylulose 5-phosphate: step 2/6. In terms of biological role, catalyzes the formation of 4-diphosphocytidyl-2-C-methyl-D-erythritol from CTP and 2-C-methyl-D-erythritol 4-phosphate (MEP). This chain is 2-C-methyl-D-erythritol 4-phosphate cytidylyltransferase, found in Chlorobium chlorochromatii (strain CaD3).